Here is a 373-residue protein sequence, read N- to C-terminus: Transcription factor NF-E2 45 kDa subunit (373 aa).

Disordered regions lie at residues 1 to 22 (MPPC…GELG) and 40 to 60 (LNVP…PGPL). The tract at residues 1-83 (MPPCPPQPNR…AGFTLPPPPY (83 aa)) is required for interaction with MAPK8. The transactivation domain stretch occupies residues 1-206 (MPPCPPQPNR…PPTETPLVLE (206 aa)). Short sequence motifs (PXY motif) lie at residues 61 to 65 (PPPTY) and 79 to 83 (PPPPY). A disordered region spans residues 131–163 (LPVGQPKPQEDPESDSGLSLNYSDAESLELEGT). The residue at position 157 (Ser157) is a Phosphoserine; by MAPK8. Position 170 is a phosphoserine; by PKA (Ser170). The segment at 206–225 (ESSSGPVRAKPAVRGEAGSR) is disordered. A bZIP domain is found at 266-329 (LVRDIRRRGK…EVMRQQLTEL (64 aa)). Residues 268–287 (RDIRRRGKNKVAAQNCRKRK) form a basic motif region. The leucine-zipper stretch occupies residues 291 to 298 (IVQLEREL). Lys368 participates in a covalent cross-link: Glycyl lysine isopeptide (Lys-Gly) (interchain with G-Cter in SUMO); alternate. Lys368 participates in a covalent cross-link: Glycyl lysine isopeptide (Lys-Gly) (interchain with G-Cter in SUMO1); alternate.

Belongs to the bZIP family. CNC subfamily. In terms of assembly, homodimer; can bind DNA as a homodimer. Erythroid transcription activator nuclear factor erythroid-derived 2 (NF-E2), composed of a heterodimer of NFE2 and MAFK, possesses transactivation activity on beta-globin. Also forms high affinity heterodimer with MAFG; the interaction promotes erythropoiesis. Interacts (via the PXY motif 1) with ITCH (via the WW 1 domain); the interaction promotes 'Lys63'-linked ubiquitination of NFE2, translocates it to the cytoplasm and inhibits its transactivation activity. Interacts with KMT2D/MLL2; the interaction promotes transactivation of the beta-globin locus. Interacts with MAPK8 (phosphorylated form); the interaction leads to phosphorylation of NFE2 in undifferentiated cells. Phosphorylated on serine residues. In undifferentiated erythrocytes, phosphorylated by MAPK8 which then leads to ubiquitination and protein degradation. In terms of processing, sumoylated. Sumoylation is required for translocation to nuclear bodies PODs, anchoring to the gene loci, and transactivation of the beta-globin gene. Post-translationally, ubiquitinated mainly by 'Lys63'-linked ubiquitin. Polyubiquitination with 'Lys63'-linked ubiquitin by ITCH retains NFE2 in the cytoplasm preventing its transactivation activity. In undifferentiated erythrocyte, ubiquitinated after MAPK8-mediatd phosphorylation leading to protein degradation.

It localises to the nucleus. Its subcellular location is the PML body. The protein resides in the cytoplasm. In terms of biological role, component of the NF-E2 complex essential for regulating erythroid and megakaryocytic maturation and differentiation. Binds to the hypersensitive site 2 (HS2) of the beta-globin control region (LCR). This subunit (NFE2) recognizes the TCAT/C sequence of the AP-1-like core palindrome present in a number of erythroid and megakaryocytic gene promoters. Requires MAFK or other small MAF proteins for binding to the NF-E2 motif. May play a role in all aspects of hemoglobin production from globin and heme synthesis to procurement of iron. This is Transcription factor NF-E2 45 kDa subunit (Nfe2) from Rattus norvegicus (Rat).